The chain runs to 1013 residues: NHS-like protein 3 (1013 aa).

K17 carries the post-translational modification Phosphoserine. Positions 20–195 (SAKAESDNRQ…PPGSRDAVRI (176 aa)) are disordered. Basic and acidic residues predominate over residues 73-89 (QHQERQKLSKGGWDHGD). Polar residues-rich tracts occupy residues 90 to 99 (TQSIQSSQTG) and 106 to 120 (SIYS…SSTA). S92 bears the Phosphoserine mark. Residue Y108 is modified to Phosphotyrosine. Phosphoserine is present on residues S136, S143, and S159. T160 is subject to Phosphothreonine. The span at 168-178 (VQKELGLRNNR) shows a compositional bias: basic and acidic residues. Residue S213 is modified to Phosphoserine. R318 is modified (asymmetric dimethylarginine). Phosphoserine is present on residues S320, S325, S328, S336, S337, S339, and S340. The interval 330–1013 (RSLGRFSSAS…PGSDPQKKLV (684 aa)) is disordered. Low complexity predominate over residues 336 to 361 (SSASSPRPRSRNASSSSDNWSHSQSS). Over residues 362–375 (ETIVSDGSTLSSKG) the composition is skewed to polar residues. 3 positions are modified to phosphoserine: S398, S402, and S407. A compositionally biased stretch (polar residues) spans 408–427 (TAETSDTASIRSSGQLSGRS). Low complexity-rich tracts occupy residues 484–493 (VGAVSCPPSS) and 515–530 (RTLS…SGTP). A Phosphothreonine modification is found at T529. S543 carries the phosphoserine modification. The span at 564–577 (SVSSSLTSLCSSSS) shows a compositional bias: low complexity. T591 carries the post-translational modification Phosphothreonine. The segment covering 600 to 614 (PPHPKVPAPFSPPPS) has biased composition (pro residues). S610 bears the Phosphoserine mark. A compositionally biased stretch (low complexity) spans 615 to 633 (KSKSSNQAAPVLAAPAVAP). Positions 635–657 (QVSTIDTSPASPSMPQTTLTPAQ) are enriched in polar residues. A phosphoserine mark is found at S667 and S671. Composition is skewed to pro residues over residues 668–683 (PPPS…PPPT) and 706–716 (PSWPPPPPPAP). Positions 779–795 (PQKDSVGKHSGAPREDS) are enriched in basic and acidic residues. The span at 814-829 (GASTGIPNPSPGSSAP) shows a compositional bias: polar residues. Residues S838, S842, and S848 each carry the phosphoserine modification. Positions 859–873 (ASSLAASESPASALP) are enriched in low complexity. Phosphoserine occurs at positions 909, 952, and 959. A compositionally biased stretch (pro residues) spans 942–961 (KAPPPVARKPSVGVPPPSPS). The span at 964–975 (RTESLTAPSTNG) shows a compositional bias: polar residues.

Its function is as follows. Able to directly activate the TNF-NFkappaB signaling pathway. In Mus musculus (Mouse), this protein is NHS-like protein 3 (Nhsl3).